The chain runs to 44 residues: Cuticle protein CP466 (44 aa).

2 tandem repeats follow at residues 3-20 (LLEG…KKYL) and 27-44 (VLLT…NVQF).

Calcified shell.

The sequence is that of Cuticle protein CP466 from Cancer pagurus (Rock crab).